Here is a 1224-residue protein sequence, read N- to C-terminus: A disintegrin and metalloproteinase with thrombospondin motifs 16 (1224 aa).

An N-terminal signal peptide occupies residues 1–24; that stretch reads MKPRARGWRGLAALWMLLAQVAEQ. A propeptide spanning residues 25–279 is cleaved from the precursor; it reads APACAMGPAA…EYKSCLRHKR (255 aa). The interval 31–53 is disordered; sequence GPAAAAPGSPSVPRPPPPAERPG. The segment covering 40–50 has biased composition (pro residues); sequence PSVPRPPPPAE. N156 carries an N-linked (GlcNAc...) asparagine glycan. The short motif at 247–254 is the Cysteine switch element; the sequence is HFCGRRKK. C249 contacts Zn(2+). Residues 290–495 form the Peptidase M12B domain; that stretch reads LNVETLVVVD…AQAICLADQP (206 aa). An N-linked (GlcNAc...) asparagine glycan is attached at N310. Intrachain disulfides connect C366–C417, C392–C399, C411–C490, C450–C474, C518–C543, C529–C550, C538–C569, C563–C574, C598–C635, C602–C640, and C613–C625. H433 lines the Zn(2+) pocket. The active site involves E434. Residues H437 and H443 each contribute to the Zn(2+) site. The Disintegrin domain occupies 496–585; that stretch reads KPVKEYKYPE…KYGDEGPKPT (90 aa). Residues 586 to 641 enclose the TSP type-1 1 domain; the sequence is HGHWSDWSSWSPCSRTCGGGVSHRSRLCTNPKPSHGGKFCEGSTRTLKLCNSQKCP. 5 N-linked (GlcNAc...) asparagine glycosylation sites follow: N741, N780, N835, N905, and N935. Residues 747–873 are spacer; sequence IHRGLYTKHH…KQPPAQPSYT (127 aa). TSP type-1 domains follow at residues 874–922, 927–987, 988–1048, 1051–1115, and 1127–1181; these read WAIV…LVPC, CPPS…QSCP, PAWS…QRCH, KKLQ…LPCP, and RGSW…HFCP. 3 disulfides stabilise this stretch: C939-C981, C943-C986, and C954-C970. Positions 1186–1223 constitute a PLAC domain; the sequence is KDAFCKDYFHWCYLVPQHGMCSHKFYGKQCCKTCSKSN.

Zn(2+) is required as a cofactor. Post-translationally, the precursor is cleaved by a furin endopeptidase. Glycosylated. Can be O-fucosylated by POFUT2 on a serine or a threonine residue found within the consensus sequence C1-X(2)-(S/T)-C2-G of the TSP type-1 repeat domains where C1 and C2 are the first and second cysteine residue of the repeat, respectively. Fucosylated repeats can then be further glycosylated by the addition of a beta-1,3-glucose residue by the glucosyltransferase, B3GALTL. Fucosylation mediates the efficient secretion of ADAMTS family members. Can also be C-glycosylated with one or two mannose molecules on tryptophan residues within the consensus sequence W-X-X-W of the TPRs, and N-glycosylated. These other glycosylations can also facilitate secretion. As to expression, expressed in fetal lung and kidney and in adult prostate and ovary.

It is found in the secreted. It localises to the extracellular space. The protein resides in the extracellular matrix. The protein is A disintegrin and metalloproteinase with thrombospondin motifs 16 (ADAMTS16) of Homo sapiens (Human).